Reading from the N-terminus, the 238-residue chain is Ephrin-A3 (238 aa).

Positions 1-22 are cleaved as a signal peptide; sequence MAAAPLLLLLLLVPVPLLPLLA. Residues 30-169 form the Ephrin RBD domain; sequence GNRHAVYWNS…RMKVFVCCAS (140 aa). N-linked (GlcNAc...) asparagine glycosylation is found at Asn38, Asn67, and Asn100. Disulfide bonds link Cys63–Cys110 and Cys99–Cys158. Gly214 carries GPI-anchor amidated glycine lipidation. Positions 215–238 are cleaved as a propeptide — removed in mature form; that stretch reads TSPKREHLPLAVGIAFFLMTFLAS.

It belongs to the ephrin family. As to quaternary structure, interacts with EPHA8; activates EPHA8. In terms of tissue distribution, expressed in brain, skeletal muscle, spleen, thymus, prostate, testis, ovary, small intestine, and peripheral blood leukocytes.

It is found in the cell membrane. Its function is as follows. Cell surface GPI-bound ligand for Eph receptors, a family of receptor tyrosine kinases which are crucial for migration, repulsion and adhesion during neuronal, vascular and epithelial development. Binds promiscuously Eph receptors residing on adjacent cells, leading to contact-dependent bidirectional signaling into neighboring cells. The signaling pathway downstream of the receptor is referred to as forward signaling while the signaling pathway downstream of the ephrin ligand is referred to as reverse signaling. This chain is Ephrin-A3 (EFNA3), found in Homo sapiens (Human).